We begin with the raw amino-acid sequence, 445 residues long: MGHQNAAVSENQNHDDGAASSPGFKLVGFSKFVRKNPKSDKFKVKRFHHIEFWCGDATNVARRFSWGLGMRFSAKSDLSTGNMVHASYLLTSGDLRFLFTAPYSPSLSAGEIKPTTTASIPSFDHGSCRSFFSSHGLGVRAVAIEVEDAESAFSISVANGAIPSSPPIVLNEAVTIAEVKLYGDVVLRYVSYKAEDTEKSEFLPGFERVEDASSFPLDYGIRRLDHAVGNVPELGPALTYVAGFTGFHQFAEFTADDVGTAESGLNSAVLASNDEMVLLPINEPVHGTKRKSQIQTYLEHNEGAGLQHLALMSEDIFRTLREMRKRSSIGGFDFMPSPPPTYYQNLKKRVGDVLSDDQIKECEELGILVDRDDQGTLLQIFTKPLGDRPTIFIEIIQRVGCMMKDEEGKAYQSGGCGGFGKGNFSELFKSIEEYEKTLEAKQLVG.

Residues 1–11 (MGHQNAAVSEN) are compositionally biased toward polar residues. The disordered stretch occupies residues 1–20 (MGHQNAAVSENQNHDDGAAS). 2 VOC domains span residues 46–192 (RFHH…YVSY) and 223–383 (RLDH…IFTK). H226, H308, and E394 together coordinate Fe cation.

It belongs to the 4HPPD family. Homodimer. Requires Fe cation as cofactor.

The protein resides in the cytoplasm. The catalysed reaction is 3-(4-hydroxyphenyl)pyruvate + O2 = homogentisate + CO2. Its pathway is amino-acid degradation; L-phenylalanine degradation; acetoacetate and fumarate from L-phenylalanine: step 3/6. It functions in the pathway cofactor biosynthesis; prenylquinone biosynthesis. Functionally, catalyzes the conversion of 4-hydroxyphenylpyruvic acid to homogentisic acid, one of the steps in tyrosine catabolism. The sequence is that of 4-hydroxyphenylpyruvate dioxygenase (HPD) from Arabidopsis thaliana (Mouse-ear cress).